Here is a 277-residue protein sequence, read N- to C-terminus: Inositol monophosphatase 1 (277 aa).

Residues glutamate 70, aspartate 90, isoleucine 92, and aspartate 93 each coordinate Mg(2+). Residue glutamate 70 coordinates substrate. 92–95 (IDGT) contacts substrate. At threonine 168 the chain carries Phosphothreonine. Substrate-binding positions include 194–196 (GTA), glutamate 213, and aspartate 220. Aspartate 220 lines the Mg(2+) pocket.

The protein belongs to the inositol monophosphatase superfamily. In terms of assembly, homodimer. Requires Mg(2+) as cofactor.

Its subcellular location is the cytoplasm. It carries out the reaction a myo-inositol phosphate + H2O = myo-inositol + phosphate. The catalysed reaction is 1D-myo-inositol 1-phosphate + H2O = myo-inositol + phosphate. It catalyses the reaction 1D-myo-inositol 2-phosphate + H2O = myo-inositol + phosphate. The enzyme catalyses 1D-myo-inositol 3-phosphate + H2O = myo-inositol + phosphate. It carries out the reaction 1D-myo-inositol 4-phosphate + H2O = myo-inositol + phosphate. The catalysed reaction is 1D-myo-inositol 5-phosphate + H2O = myo-inositol + phosphate. It catalyses the reaction 1D-myo-inositol 6-phosphate + H2O = myo-inositol + phosphate. The enzyme catalyses scyllo-inositol 1-phosphate + H2O = scyllo-inositol + phosphate. It carries out the reaction alpha-D-galactose 1-phosphate + H2O = D-galactose + phosphate. The catalysed reaction is alpha-D-glucose 1-phosphate + H2O = D-glucose + phosphate. It catalyses the reaction D-glucose 6-phosphate + H2O = D-glucose + phosphate. The enzyme catalyses beta-D-fructose 1-phosphate + H2O = D-fructose + phosphate. It carries out the reaction glycerol 2-phosphate + H2O = glycerol + phosphate. The catalysed reaction is adenosine 2'-phosphate + H2O = adenosine + phosphate. The protein operates within polyol metabolism; myo-inositol biosynthesis; myo-inositol from D-glucose 6-phosphate: step 2/2. Its activity is regulated as follows. Inhibited by Li(+), Ca(2+) and Mn(2+), but also by Mg(2+) at concentrations above 3 mM. Functionally, phosphatase involved in the dephosphorylation of myo-inositol monophosphate to generate myo-inositol. Is also able to dephosphorylate scyllo-inositol-phosphate, myo-inositol 1,4-diphosphate, scyllo-inositol-1,3-diphosphate and scyllo-inositol-1,4-diphosphate. Also dephosphorylates in vitro other sugar-phosphates including D-galactose-1-phosphate, glucose-1-phosphate, glucose-6-phosphate, fructose-1-phosphate, beta-glycerophosphate and 2'-AMP. Responsible for the provision of inositol required for synthesis of phosphatidylinositol and polyphosphoinositides, and involved in maintaining normal brain function. Has been implicated as the pharmacological target for lithium Li(+) action in brain. The sequence is that of Inositol monophosphatase 1 (IMPA1) from Pongo abelii (Sumatran orangutan).